Consider the following 382-residue polypeptide: Chaperone protein DnaJ (382 aa).

The region spanning 5-70 is the J domain; the sequence is DYYDLLGLSK…DKRAAYDRYG (66 aa). A CR-type zinc finger spans residues 138 to 216; sequence GTKVPINYVT…CSGSGRVRDE (79 aa). Residues Cys-151, Cys-154, Cys-168, Cys-171, Cys-190, Cys-193, Cys-204, and Cys-207 each coordinate Zn(2+). CXXCXGXG motif repeat units lie at residues 151–158, 168–175, 190–197, and 204–211; these read CSSCSGSG, CNTCHGAG, CHVCNGEG, and CKKCSGSG.

Belongs to the DnaJ family. In terms of assembly, homodimer. Zn(2+) is required as a cofactor.

Its subcellular location is the cytoplasm. Participates actively in the response to hyperosmotic and heat shock by preventing the aggregation of stress-denatured proteins and by disaggregating proteins, also in an autonomous, DnaK-independent fashion. Unfolded proteins bind initially to DnaJ; upon interaction with the DnaJ-bound protein, DnaK hydrolyzes its bound ATP, resulting in the formation of a stable complex. GrpE releases ADP from DnaK; ATP binding to DnaK triggers the release of the substrate protein, thus completing the reaction cycle. Several rounds of ATP-dependent interactions between DnaJ, DnaK and GrpE are required for fully efficient folding. Also involved, together with DnaK and GrpE, in the DNA replication of plasmids through activation of initiation proteins. In Ehrlichia ruminantium (strain Welgevonden), this protein is Chaperone protein DnaJ.